Reading from the N-terminus, the 159-residue chain is Phosphopantetheine adenylyltransferase (159 aa).

Thr-10 contributes to the substrate binding site. ATP is bound by residues 10-11 and His-18; that span reads TF. Substrate is bound by residues Lys-42, Met-74, and Arg-88. ATP-binding positions include 89-91, Glu-99, and 124-130; these read GLR and WSFISSS.

This sequence belongs to the bacterial CoaD family. In terms of assembly, homohexamer. Mg(2+) is required as a cofactor.

Its subcellular location is the cytoplasm. It carries out the reaction (R)-4'-phosphopantetheine + ATP + H(+) = 3'-dephospho-CoA + diphosphate. It participates in cofactor biosynthesis; coenzyme A biosynthesis; CoA from (R)-pantothenate: step 4/5. Functionally, reversibly transfers an adenylyl group from ATP to 4'-phosphopantetheine, yielding dephospho-CoA (dPCoA) and pyrophosphate. This is Phosphopantetheine adenylyltransferase from Escherichia coli (strain SMS-3-5 / SECEC).